The chain runs to 761 residues: BMP/retinoic acid-inducible neural-specific protein 1 (761 aa).

Residues 1-19 form the signal peptide; that stretch reads MNWRFVELLYFLFIWGRIS. Residues 68–251 enclose the MACPF domain; it reads RYKIYREFAR…FVQSALSYIM (184 aa). Residues Asn-156, Asn-433, Asn-443, Asn-553, Asn-599, Asn-631, and Asn-677 are each glycosylated (N-linked (GlcNAc...) asparagine).

Belongs to the BRINP family. As to expression, highly expressed in brain. Weakly expressed in heart, lung, skeletal muscle, kidney, thymus, prostate, testis and small intestine.

Its subcellular location is the cytoplasm. Functionally, plays a role in neurogenesis and brain development. May suppress cell cycle progression in postmitotic neurons by inhibiting G1/S transition. In Homo sapiens (Human), this protein is BMP/retinoic acid-inducible neural-specific protein 1 (BRINP1).